The primary structure comprises 592 residues: Putative esterase (592 aa).

Residues 12 to 32 (LTLIAYLSVLMGVSVYFYVLI) traverse the membrane as a helical segment. 5 N-linked (GlcNAc...) asparagine; by host glycosylation sites follow: Asn68, Asn83, Asn95, Asn447, and Asn510. His513 serves as the catalytic Charge relay system. N-linked (GlcNAc...) asparagine; by host glycosylation is present at Asn528.

This sequence belongs to the type-B carboxylesterase/lipase family.

The protein localises to the membrane. The catalysed reaction is a carboxylic ester + H2O = an alcohol + a carboxylate + H(+). This Spodoptera frugiperda (Fall armyworm) protein is Putative esterase.